A 350-amino-acid polypeptide reads, in one-letter code: UDP-N-acetylenolpyruvoylglucosamine reductase (350 aa).

Residues 24–195 (HVEATARWLL…VAVEFNLPLL (172 aa)) form the FAD-binding PCMH-type domain. The active site involves arginine 172. The active-site Proton donor is serine 245. Residue glutamate 342 is part of the active site.

Belongs to the MurB family. The cofactor is FAD.

The protein localises to the cytoplasm. It carries out the reaction UDP-N-acetyl-alpha-D-muramate + NADP(+) = UDP-N-acetyl-3-O-(1-carboxyvinyl)-alpha-D-glucosamine + NADPH + H(+). The protein operates within cell wall biogenesis; peptidoglycan biosynthesis. Functionally, cell wall formation. This is UDP-N-acetylenolpyruvoylglucosamine reductase from Xanthomonas axonopodis pv. citri (strain 306).